The chain runs to 124 residues: Protein YebF (124 aa).

The N-terminal stretch at 1 to 27 is a signal peptide; the sequence is MKTCHIINRVGLSGVALLLTVSFTVSA. Positions 36–123 constitute a YebF/Cmi domain; the sequence is KFISCDNLTK…QQNTISYSEL (88 aa). A disulfide bridge connects residues C40 and C113.

This sequence belongs to the YebF family.

It is found in the secreted. The chain is Protein YebF from Photorhabdus laumondii subsp. laumondii (strain DSM 15139 / CIP 105565 / TT01) (Photorhabdus luminescens subsp. laumondii).